The following is an 882-amino-acid chain: Serine/threonine-protein kinase greatwall (882 aa).

Methionine 1 carries the N-acetylmethionine modification. The 804-residue stretch at 35–838 (FTIVKPISRG…MKELKRHHLF (804 aa)) folds into the Protein kinase domain. ATP is bound by residues 41–49 (ISRGAFGKV) and lysine 62. Aspartate 156 (proton acceptor) is an active-site residue. Phosphothreonine occurs at positions 207 and 222. Phosphoserine occurs at positions 293, 371, and 454. Threonine 521 bears the Phosphothreonine mark. Phosphoserine is present on residues serine 554, serine 558, serine 633, serine 660, and serine 671. The segment at 713 to 736 (TPNQVKSGTPYRTPKSVRRGAAPV) is disordered. The residue at position 725 (threonine 725) is a Phosphothreonine. Serine 728 is modified (phosphoserine). Phosphothreonine; by CDK1 is present on threonine 744. The 44-residue stretch at 839–882 (SDVDWENLQHQTMPFIPQPDDETDTSYFEARNNAQHLTISGFSL) folds into the AGC-kinase C-terminal domain. 2 positions are modified to phosphoserine: serine 878 and serine 881.

The protein belongs to the protein kinase superfamily. AGC Ser/Thr protein kinase family. Post-translationally, phosphorylation at Thr-744 by CDK1 during M phase activates its kinase activity. Maximum phosphorylation occurs in prometaphase.

Its subcellular location is the cytoplasm. The protein resides in the cytoskeleton. The protein localises to the microtubule organizing center. It is found in the centrosome. It localises to the nucleus. The enzyme catalyses L-seryl-[protein] + ATP = O-phospho-L-seryl-[protein] + ADP + H(+). The catalysed reaction is L-threonyl-[protein] + ATP = O-phospho-L-threonyl-[protein] + ADP + H(+). Functionally, serine/threonine kinase that plays a key role in M phase by acting as a regulator of mitosis entry and maintenance. Acts by promoting the inactivation of protein phosphatase 2A (PP2A) during M phase: does not directly inhibit PP2A but acts by mediating phosphorylation and subsequent activation of ARPP19 and ENSA at 'Ser-62' and 'Ser-67', respectively. ARPP19 and ENSA are phosphatase inhibitors that specifically inhibit the PPP2R2D (PR55-delta) subunit of PP2A. Inactivation of PP2A during M phase is essential to keep cyclin-B1-CDK1 activity high. Following DNA damage, it is also involved in checkpoint recovery by being inhibited. The protein is Serine/threonine-protein kinase greatwall (MASTL) of Ailuropoda melanoleuca (Giant panda).